The following is a 343-amino-acid chain: Probable 3',5'-cyclic-nucleotide phosphodiesterase (343 aa).

The N-terminal stretch at 1-36 (MKYLSIKSASDKIKSGLLKTGVILSFSLFSSLSTAA) is a signal peptide.

This sequence belongs to the cyclic nucleotide phosphodiesterase class-II family.

Its subcellular location is the periplasm. It carries out the reaction a nucleoside 3',5'-cyclic phosphate + H2O = a nucleoside 5'-phosphate + H(+). The polypeptide is Probable 3',5'-cyclic-nucleotide phosphodiesterase (cpdP) (Yersinia pestis).